Reading from the N-terminus, the 289-residue chain is UDP-3-O-acyl-N-acetylglucosamine deacetylase (289 aa).

Zn(2+) is bound by residues H79, H236, and D240. H263 (proton donor) is an active-site residue.

This sequence belongs to the LpxC family. Zn(2+) is required as a cofactor.

The enzyme catalyses a UDP-3-O-[(3R)-3-hydroxyacyl]-N-acetyl-alpha-D-glucosamine + H2O = a UDP-3-O-[(3R)-3-hydroxyacyl]-alpha-D-glucosamine + acetate. It participates in glycolipid biosynthesis; lipid IV(A) biosynthesis; lipid IV(A) from (3R)-3-hydroxytetradecanoyl-[acyl-carrier-protein] and UDP-N-acetyl-alpha-D-glucosamine: step 2/6. In terms of biological role, catalyzes the hydrolysis of UDP-3-O-myristoyl-N-acetylglucosamine to form UDP-3-O-myristoylglucosamine and acetate, the committed step in lipid A biosynthesis. The chain is UDP-3-O-acyl-N-acetylglucosamine deacetylase from Rickettsia typhi (strain ATCC VR-144 / Wilmington).